Reading from the N-terminus, the 849-residue chain is Alanine--tRNA ligase (849 aa).

Residues His551, His555, Cys653, and His657 each contribute to the Zn(2+) site.

The protein belongs to the class-II aminoacyl-tRNA synthetase family. It depends on Zn(2+) as a cofactor.

It is found in the cytoplasm. The catalysed reaction is tRNA(Ala) + L-alanine + ATP = L-alanyl-tRNA(Ala) + AMP + diphosphate. Catalyzes the attachment of alanine to tRNA(Ala) in a two-step reaction: alanine is first activated by ATP to form Ala-AMP and then transferred to the acceptor end of tRNA(Ala). Also edits incorrectly charged Ser-tRNA(Ala) and Gly-tRNA(Ala) via its editing domain. The polypeptide is Alanine--tRNA ligase (Sulfurimonas denitrificans (strain ATCC 33889 / DSM 1251) (Thiomicrospira denitrificans (strain ATCC 33889 / DSM 1251))).